A 366-amino-acid chain; its full sequence is 3-dehydroquinate synthase (366 aa).

Residues 75–80, 109–113, 133–134, Lys146, Lys155, and 173–176 contribute to the NAD(+) site; these read DGEQYK, GVIGD, TT, and CLST. Zn(2+)-binding residues include Glu188, His251, and His268.

It belongs to the sugar phosphate cyclases superfamily. Dehydroquinate synthase family. It depends on Co(2+) as a cofactor. Zn(2+) serves as cofactor. NAD(+) is required as a cofactor.

The protein localises to the cytoplasm. The enzyme catalyses 7-phospho-2-dehydro-3-deoxy-D-arabino-heptonate = 3-dehydroquinate + phosphate. The protein operates within metabolic intermediate biosynthesis; chorismate biosynthesis; chorismate from D-erythrose 4-phosphate and phosphoenolpyruvate: step 2/7. Its function is as follows. Catalyzes the conversion of 3-deoxy-D-arabino-heptulosonate 7-phosphate (DAHP) to dehydroquinate (DHQ). The polypeptide is 3-dehydroquinate synthase (Vibrio campbellii (strain ATCC BAA-1116)).